A 543-amino-acid polypeptide reads, in one-letter code: Thermosome subunit beta (543 aa).

A disordered region spans residues 522–543 (TKSSSSSSNPPKSGSSSESSED). Residues 523-543 (KSSSSSSNPPKSGSSSESSED) show a composition bias toward low complexity.

Belongs to the TCP-1 chaperonin family. Forms a Heterooligomeric complex of two stacked eight-membered rings. In terms of processing, the N-terminus is blocked.

Functionally, molecular chaperone; binds unfolded polypeptides in vitro, and has a weak ATPase activity. This chain is Thermosome subunit beta (thsB), found in Thermoplasma acidophilum (strain ATCC 25905 / DSM 1728 / JCM 9062 / NBRC 15155 / AMRC-C165).